Reading from the N-terminus, the 429-residue chain is 3-phosphoshikimate 1-carboxyvinyltransferase (429 aa).

3-phosphoshikimate-binding residues include Lys-23, Ser-24, and Arg-28. Position 23 (Lys-23) interacts with phosphoenolpyruvate. Positions 95 and 123 each coordinate phosphoenolpyruvate. 4 residues coordinate 3-phosphoshikimate: Ser-168, Gln-170, Asp-316, and Lys-343. Residue Gln-170 participates in phosphoenolpyruvate binding. Asp-316 serves as the catalytic Proton acceptor. Phosphoenolpyruvate contacts are provided by Arg-347 and Arg-389.

This sequence belongs to the EPSP synthase family. In terms of assembly, monomer.

Its subcellular location is the cytoplasm. The enzyme catalyses 3-phosphoshikimate + phosphoenolpyruvate = 5-O-(1-carboxyvinyl)-3-phosphoshikimate + phosphate. Its pathway is metabolic intermediate biosynthesis; chorismate biosynthesis; chorismate from D-erythrose 4-phosphate and phosphoenolpyruvate: step 6/7. Functionally, catalyzes the transfer of the enolpyruvyl moiety of phosphoenolpyruvate (PEP) to the 5-hydroxyl of shikimate-3-phosphate (S3P) to produce enolpyruvyl shikimate-3-phosphate and inorganic phosphate. The polypeptide is 3-phosphoshikimate 1-carboxyvinyltransferase (Oceanobacillus iheyensis (strain DSM 14371 / CIP 107618 / JCM 11309 / KCTC 3954 / HTE831)).